Consider the following 688-residue polypeptide: Translation initiation factor IF-2 (688 aa).

Basic and acidic residues-rich tracts occupy residues 53–62 and 86–95; these read GKEKSEKTKE and KRDDKNEKVN. Residues 53-100 are disordered; sequence GKEKSEKTKEEDDEIETTAKNPIKESMNNKKSNKRDDKNEKVNTENAE. A tr-type G domain is found at 187-354; sequence KRSPIITVMG…MILLSSEILE (168 aa). Residues 196 to 203 form a G1 region; it reads GHVDHGKT. Residue 196-203 coordinates GTP; the sequence is GHVDHGKT. Residues 221–225 are G2; it reads GITQH. Residues 242–245 are G3; it reads DTPG. Residues 242–246 and 296–299 each bind GTP; these read DTPGH and NKID. Positions 296–299 are G4; it reads NKID. The G5 stretch occupies residues 332-334; it reads SAH.

It belongs to the TRAFAC class translation factor GTPase superfamily. Classic translation factor GTPase family. IF-2 subfamily.

Its subcellular location is the cytoplasm. One of the essential components for the initiation of protein synthesis. Protects formylmethionyl-tRNA from spontaneous hydrolysis and promotes its binding to the 30S ribosomal subunits. Also involved in the hydrolysis of GTP during the formation of the 70S ribosomal complex. The chain is Translation initiation factor IF-2 from Clostridium botulinum (strain ATCC 19397 / Type A).